A 90-amino-acid chain; its full sequence is Small ribosomal subunit protein bS20 (90 aa).

The protein belongs to the bacterial ribosomal protein bS20 family.

In terms of biological role, binds directly to 16S ribosomal RNA. This is Small ribosomal subunit protein bS20 from Acidiphilium cryptum (strain JF-5).